Consider the following 408-residue polypeptide: tRNA(Met) cytidine acetate ligase (408 aa).

ATP is bound by residues 7–20 (IVEY…HKYH), Gly102, Asn170, and 195–196 (RI).

This sequence belongs to the TmcAL family.

It is found in the cytoplasm. It carries out the reaction cytidine(34) in elongator tRNA(Met) + acetate + ATP = N(4)-acetylcytidine(34) in elongator tRNA(Met) + AMP + diphosphate. Catalyzes the formation of N(4)-acetylcytidine (ac(4)C) at the wobble position of elongator tRNA(Met), using acetate and ATP as substrates. First activates an acetate ion to form acetyladenylate (Ac-AMP) and then transfers the acetyl group to tRNA to form ac(4)C34. This is tRNA(Met) cytidine acetate ligase from Clostridium kluyveri (strain NBRC 12016).